The primary structure comprises 303 residues: D-alanine--D-alanine ligase (303 aa).

An ATP-grasp domain is found at 103–293 (KTLFIKGGIP…FAQLCEKILE (191 aa)). 130 to 179 (PYVIKPSRQGSSIGIEFVYDIKELDQAIKKSTQYDHVVLAEALITGKELT) serves as a coordination point for ATP. Positions 247, 260, and 262 each coordinate Mg(2+).

This sequence belongs to the D-alanine--D-alanine ligase family. Mg(2+) is required as a cofactor. Mn(2+) serves as cofactor.

The protein localises to the cytoplasm. It catalyses the reaction 2 D-alanine + ATP = D-alanyl-D-alanine + ADP + phosphate + H(+). It participates in cell wall biogenesis; peptidoglycan biosynthesis. Its function is as follows. Cell wall formation. The sequence is that of D-alanine--D-alanine ligase from Methylacidiphilum infernorum (isolate V4) (Methylokorus infernorum (strain V4)).